We begin with the raw amino-acid sequence, 760 residues long: Alpha-amylase (760 aa).

The N-terminal stretch at 1–34 (MSKRSKLLKRRMLSLSVICVLIGYGPVFNPVRSQ) is a signal peptide. Ca(2+)-binding residues include N143, T184, and D192. D222 (nucleophile) is an active-site residue. H226 is a binding site for Ca(2+). The active-site Proton donor is the E262.

The protein belongs to the glycosyl hydrolase 13 family. In terms of assembly, monomer. The cofactor is Ca(2+).

The catalysed reaction is Endohydrolysis of (1-&gt;4)-alpha-D-glucosidic linkages in polysaccharides containing three or more (1-&gt;4)-alpha-linked D-glucose units.. The polypeptide is Alpha-amylase (amyA) (Clostridium acetobutylicum (strain ATCC 824 / DSM 792 / JCM 1419 / IAM 19013 / LMG 5710 / NBRC 13948 / NRRL B-527 / VKM B-1787 / 2291 / W)).